The chain runs to 137 residues: Peptide methionine sulfoxide reductase MsrB (137 aa).

The region spanning 7–129 is the MsrB domain; that stretch reads PGELKNGLSE…NSASLSFTDE (123 aa). 4 residues coordinate Zn(2+): cysteine 46, cysteine 49, cysteine 95, and cysteine 98. The active-site Nucleophile is the cysteine 118.

The protein belongs to the MsrB Met sulfoxide reductase family. It depends on Zn(2+) as a cofactor.

The catalysed reaction is L-methionyl-[protein] + [thioredoxin]-disulfide + H2O = L-methionyl-(R)-S-oxide-[protein] + [thioredoxin]-dithiol. The protein is Peptide methionine sulfoxide reductase MsrB of Klebsiella pneumoniae (strain 342).